We begin with the raw amino-acid sequence, 133 residues long: Large ribosomal subunit protein uL14 (133 aa).

Belongs to the universal ribosomal protein uL14 family. In terms of assembly, part of the 50S ribosomal subunit. Forms a cluster with proteins L3 and L19. In the 70S ribosome, L14 and L19 interact and together make contacts with the 16S rRNA in bridges B5 and B8.

Binds to 23S rRNA. Forms part of two intersubunit bridges in the 70S ribosome. In Gloeobacter violaceus (strain ATCC 29082 / PCC 7421), this protein is Large ribosomal subunit protein uL14.